We begin with the raw amino-acid sequence, 219 residues long: Mucosal pentraxin (219 aa).

An N-terminal signal peptide occupies residues 1–19; it reads MEKLIVGILFLSVLSGSVA. Positions 24–219 constitute a Pentraxin (PTX) domain; that stretch reads KGKAFIFPQE…YVVIKPKLWP (196 aa). Asn51 carries N-linked (GlcNAc...) asparagine glycosylation. A disulfide bond links Cys55 and Cys114. Residues Asp77, Asn78, Glu155, Gln156, Asp157, and Gln167 each contribute to the Ca(2+) site.

This sequence belongs to the pentraxin family. As to quaternary structure, homopentamer. Pentraxin (or pentaxin) have a discoid arrangement of 5 non-covalently bound subunits. Ca(2+) serves as cofactor. In terms of tissue distribution, expressed in colon.

It localises to the secreted. This chain is Mucosal pentraxin (Mptx1), found in Mus musculus (Mouse).